A 142-amino-acid chain; its full sequence is MSNILGLDVGSKTIGLASSTGNVAKKEINLKFEEWNFEEGVSLLTEFIKDKSFDTFVFGYPKNMNGSIGERAEMVDYFIEGFMVYNPEIKEEQIIRIDERRTTKMAKSIMIEAGLSRQKQKENKDTLAAQLILETYLEKIKK.

It belongs to the YqgF nuclease family.

The protein localises to the cytoplasm. Functionally, could be a nuclease involved in processing of the 5'-end of pre-16S rRNA. The protein is Putative pre-16S rRNA nuclease of Mesoplasma florum (strain ATCC 33453 / NBRC 100688 / NCTC 11704 / L1) (Acholeplasma florum).